Consider the following 239-residue polypeptide: Fatty acid metabolism regulator protein (239 aa).

The HTH gntR-type domain maps to 6-74 (KGPASFAEKY…HGKPTRVNNF (69 aa)). The segment at residues 34–53 (ERELSELIGVTRTTLREVLQ) is a DNA-binding region (H-T-H motif).

In terms of assembly, homodimer.

It is found in the cytoplasm. Its function is as follows. Multifunctional regulator of fatty acid metabolism. This Shewanella pealeana (strain ATCC 700345 / ANG-SQ1) protein is Fatty acid metabolism regulator protein.